Consider the following 353-residue polypeptide: Rhodopsin (353 aa).

The Extracellular segment spans residues 1-36 (MNGTEGPFFYVPMLNTTGIVRSPYDYPQYYLVNPAA). 2 N-linked (GlcNAc...) asparagine glycosylation sites follow: asparagine 2 and asparagine 15. The helical transmembrane segment at 37 to 61 (YAALGAYMFLLILLGFPINFLTLYV) threads the bilayer. The Cytoplasmic segment spans residues 62-73 (TIEHKKLRTPLN). Residues 74 to 96 (YILLNLAVANLFMVFGGFTTTMY) traverse the membrane as a helical segment. Topologically, residues 97–110 (TSMHGYFVLGRLGC) are extracellular. An intrachain disulfide couples cysteine 110 to cysteine 187. Residues 111 to 133 (NLEGFFATLGGEIGLWSLVVLAI) form a helical membrane-spanning segment. A 'Ionic lock' involved in activated form stabilization motif is present at residues 134–136 (ERW). Over 134–152 (ERWMVVCKPISNFRFGENH) the chain is Cytoplasmic. Residues 153–173 (AIMGLAFTWIMACACAVPPLV) form a helical membrane-spanning segment. The Extracellular segment spans residues 174–202 (GWSRYIPEGMQCSCGVDYYTRAEGFNNES). The N-linked (GlcNAc...) asparagine glycan is linked to asparagine 200. A helical transmembrane segment spans residues 203–224 (FVVYMFICHFLIPMAVVFFCYG). Topologically, residues 225-252 (RLLCAVKEAAAAQQESETTQRAEREVTR) are cytoplasmic. The chain crosses the membrane as a helical span at residues 253–274 (MVVIMVVAFLICWLPYAGVAWW). At 275-286 (IFTHQGSEFGPV) the chain is on the extracellular side. Residues 287–308 (FMTIPAFFAKSSSIYNPLIYIC) traverse the membrane as a helical segment. An N6-(retinylidene)lysine modification is found at lysine 296. At 309–353 (MNKQFRHCMITTLCCGKNPFEEEEGASTTSKTEASSVSSSSVSPA) the chain is on the cytoplasmic side. 2 S-palmitoyl cysteine lipidation sites follow: cysteine 322 and cysteine 323. The tract at residues 330 to 353 (EEEGASTTSKTEASSVSSSSVSPA) is disordered. Over residues 334 to 353 (ASTTSKTEASSVSSSSVSPA) the composition is skewed to low complexity.

This sequence belongs to the G-protein coupled receptor 1 family. Opsin subfamily. Phosphorylated on some or all of the serine and threonine residues present in the C-terminal region. Post-translationally, contains one covalently linked retinal chromophore.

The protein localises to the membrane. Its subcellular location is the cell projection. It is found in the cilium. The protein resides in the photoreceptor outer segment. In terms of biological role, photoreceptor required for image-forming vision at low light intensity. While most salt water fish species use retinal as chromophore, most freshwater fish use 3-dehydroretinal, or a mixture of retinal and 3-dehydroretinal. Light-induced isomerization of 11-cis to all-trans retinal triggers a conformational change that activates signaling via G-proteins. Subsequent receptor phosphorylation mediates displacement of the bound G-protein alpha subunit by arrestin and terminates signaling. In Tetraodon nigroviridis (Spotted green pufferfish), this protein is Rhodopsin (rho).